The following is a 324-amino-acid chain: 6-methylsalicylic acid decarboxylase (324 aa).

Zn(2+) is bound by residues H7, H9, H157, and D274.

This sequence belongs to the metallo-dependent hydrolases superfamily. ACMSD family. Monomer.

Its subcellular location is the cytoplasm. It is found in the cytosol. The enzyme catalyses 6-methylsalicylate + H(+) = 3-methylphenol + CO2. It participates in mycotoxin biosynthesis; patulin biosynthesis. Its function is as follows. 6-methylsalicylic acid decarboxylase; part of the gene cluster that mediates the biosynthesis of patulin, an acetate-derived tetraketide mycotoxin produced by several fungal species that shows antimicrobial properties against several bacteria. PatG catalyzes the decarboxylation of 6-methylsalicylic acid to yield m-cresol. The pathway begins with the synthesis of 6-methylsalicylic acid by the polyketide synthase (PKS) patK via condensation of acetate and malonate units. The 6-methylsalicylic acid decarboxylase patG then catalyzes the decarboxylation of 6-methylsalicylic acid to yield m-cresol (also known as 3-methylphenol). These first reactions occur in the cytosol. The intermediate m-cresol is then transported into the endoplasmic reticulum where the cytochrome P450 monooxygenase patH converts it to m-hydroxybenzyl alcohol, which is further converted to gentisyl alcohol by the cytochrome P450 monooxygenase patI. The oxidoreductases patJ and patO further convert gentisyl alcohol to isoepoxydon in the vacuole. PatN catalyzes then the transformation of isoepoxydon into phyllostine. The cluster protein patF is responsible for the conversion from phyllostine to neopatulin whereas the alcohol dehydrogenase patD converts neopatulin to E-ascladiol. The steps between isoepoxydon and E-ascladiol occur in the cytosol, and E-ascladiol is probably secreted to the extracellular space by one of the cluster-specific transporters patC or patM. Finally, the secreted patulin synthase patE catalyzes the conversion of E-ascladiol to patulin. The polypeptide is 6-methylsalicylic acid decarboxylase (Penicillium expansum (Blue mold rot fungus)).